The sequence spans 187 residues: Capsid protein (187 aa).

The interval 150–187 (RRGGARASRSPRRRTPSPRRRRSQSPRRRRSQSPSANC) is disordered. The span at 158 to 180 (RSPRRRTPSPRRRRSQSPRRRRS) shows a compositional bias: basic residues. A phosphoserine; by host mark is found at serine 159, serine 166, and serine 174. One copy of the 1; half-length repeat lies at 159 to 165 (SPRRRTP). The tract at residues 159–181 (SPRRRTPSPRRRRSQSPRRRRSQ) is 3 X 8 AA repeats of S-P-R-R-R-[PR]-S-Q. A Bipartite nuclear localization signal motif is present at residues 162-179 (RRTPSPRRRRSQSPRRRR). Repeat copies occupy residues 166 to 173 (SPRRRRSQ) and 174 to 181 (SPRRRRSQ). An RNA binding region spans residues 181 to 187 (QSPSANC).

It belongs to the orthohepadnavirus core antigen family. As to quaternary structure, homodimerizes, then multimerizes. Interacts with cytosol exposed regions of viral L glycoprotein present in the reticulum-to-Golgi compartment. Interacts with human FLNB. Phosphorylated form interacts with host importin alpha; this interaction depends on the exposure of the NLS, which itself depends upon genome maturation and/or phosphorylation of the capsid protein. Interacts with host NUP153. In terms of processing, phosphorylated by host SRPK1, SRPK2, and maybe protein kinase C or GAPDH. Phosphorylation is critical for pregenomic RNA packaging. Protein kinase C phosphorylation is stimulated by HBx protein and may play a role in transport of the viral genome to the nucleus at the late step during the viral replication cycle.

It is found in the virion. Its subcellular location is the host cytoplasm. Self assembles to form an icosahedral capsid. Most capsids appear to be large particles with an icosahedral symmetry of T=4 and consist of 240 copies of capsid protein, though a fraction forms smaller T=3 particles consisting of 180 capsid proteins. Entering capsids are transported along microtubules to the nucleus. Phosphorylation of the capsid is thought to induce exposure of nuclear localization signal in the C-terminal portion of the capsid protein that allows binding to the nuclear pore complex via the importin (karyopherin-) alpha and beta. Capsids are imported in intact form through the nuclear pore into the nuclear basket, where it probably binds NUP153. Only capsids that contain the mature viral genome can release the viral DNA and capsid protein into the nucleoplasm. Immature capsids get stuck in the basket. Capsids encapsulate the pre-genomic RNA and the P protein. Pre-genomic RNA is reverse-transcribed into DNA while the capsid is still in the cytoplasm. The capsid can then either be directed to the nucleus, providing more genomes for transcription, or bud through the endoplasmic reticulum to provide new virions. This chain is Capsid protein, found in Marmota monax (Woodchuck).